Reading from the N-terminus, the 108-residue chain is Signal recognition particle 19 kDa protein (108 aa).

Belongs to the SRP19 family. Part of the signal recognition particle protein translocation system, which is composed of SRP and FtsY. Archaeal SRP consists of a 7S RNA molecule of 300 nucleotides and two protein subunits: SRP54 and SRP19.

It is found in the cytoplasm. In terms of biological role, involved in targeting and insertion of nascent membrane proteins into the cytoplasmic membrane. Binds directly to 7S RNA and mediates binding of the 54 kDa subunit of the SRP. This chain is Signal recognition particle 19 kDa protein, found in Thermococcus kodakarensis (strain ATCC BAA-918 / JCM 12380 / KOD1) (Pyrococcus kodakaraensis (strain KOD1)).